The sequence spans 628 residues: Protein SDS23 (628 aa).

Positions 1-126 (MVNPPQPRQM…NKSSSQSIAP (126 aa)) are disordered. Positions 15–24 (RLSTSTSSGP) are enriched in polar residues. Low complexity-rich tracts occupy residues 40–71 (QLQHQPSSASTSSTTSTATTGGSISATAPGST) and 109–123 (SRHASTSSNKSSSQS). CBS domains are found at residues 258–319 (LHPK…RFPS) and 334–392 (GSSN…SHLL). Residues 551–609 (GRRTDPQAARNQRRRSSTSTTRSSIDSALSAEGILPSGSAIIGSSNAANTGRRGSVEVS) form a disordered region. The span at 587-599 (SGSAIIGSSNAAN) shows a compositional bias: low complexity.

This sequence belongs to the SDS23 family.

Its subcellular location is the cytoplasm. The protein resides in the nucleus. In terms of biological role, involved in DNA replication and cell separation. The protein is Protein SDS23 (SDS24) of Candida albicans (strain SC5314 / ATCC MYA-2876) (Yeast).